A 509-amino-acid chain; its full sequence is Maturase K (509 aa).

It belongs to the intron maturase 2 family. MatK subfamily.

Its subcellular location is the plastid. The protein resides in the chloroplast. Usually encoded in the trnK tRNA gene intron. Probably assists in splicing its own and other chloroplast group II introns. This Vatairea macrocarpa protein is Maturase K.